A 228-amino-acid polypeptide reads, in one-letter code: Biosynthetic peptidoglycan transglycosylase (228 aa).

The chain crosses the membrane as a helical span at residues 8–28 (ILAALVAAFLLYNLWVLGHII).

It belongs to the glycosyltransferase 51 family.

The protein localises to the cell inner membrane. The enzyme catalyses [GlcNAc-(1-&gt;4)-Mur2Ac(oyl-L-Ala-gamma-D-Glu-L-Lys-D-Ala-D-Ala)](n)-di-trans,octa-cis-undecaprenyl diphosphate + beta-D-GlcNAc-(1-&gt;4)-Mur2Ac(oyl-L-Ala-gamma-D-Glu-L-Lys-D-Ala-D-Ala)-di-trans,octa-cis-undecaprenyl diphosphate = [GlcNAc-(1-&gt;4)-Mur2Ac(oyl-L-Ala-gamma-D-Glu-L-Lys-D-Ala-D-Ala)](n+1)-di-trans,octa-cis-undecaprenyl diphosphate + di-trans,octa-cis-undecaprenyl diphosphate + H(+). It functions in the pathway cell wall biogenesis; peptidoglycan biosynthesis. Peptidoglycan polymerase that catalyzes glycan chain elongation from lipid-linked precursors. The protein is Biosynthetic peptidoglycan transglycosylase of Chromobacterium violaceum (strain ATCC 12472 / DSM 30191 / JCM 1249 / CCUG 213 / NBRC 12614 / NCIMB 9131 / NCTC 9757 / MK).